A 652-amino-acid chain; its full sequence is Acetyl-coenzyme A synthetase (652 aa).

Residues 191-194, Thr-311, and Asn-335 contribute to the CoA site; that span reads RAGR. Residues 387–389, 411–416, Asp-500, and Arg-515 each bind ATP; these read GEP and DTWWQT. Ser-523 provides a ligand contact to CoA. Arg-526 serves as a coordination point for ATP. 3 residues coordinate Mg(2+): Val-537, His-539, and Ile-542. Arg-584 serves as a coordination point for CoA. Lys-609 carries the post-translational modification N6-acetyllysine.

It belongs to the ATP-dependent AMP-binding enzyme family. It depends on Mg(2+) as a cofactor. In terms of processing, acetylated. Deacetylation by the SIR2-homolog deacetylase activates the enzyme.

The catalysed reaction is acetate + ATP + CoA = acetyl-CoA + AMP + diphosphate. Its function is as follows. Catalyzes the conversion of acetate into acetyl-CoA (AcCoA), an essential intermediate at the junction of anabolic and catabolic pathways. Acs undergoes a two-step reaction. In the first half reaction, Acs combines acetate with ATP to form acetyl-adenylate (AcAMP) intermediate. In the second half reaction, it can then transfer the acetyl group from AcAMP to the sulfhydryl group of CoA, forming the product AcCoA. In terms of biological role, enables the cell to use acetate during aerobic growth to generate energy via the TCA cycle, and biosynthetic compounds via the glyoxylate shunt. Acetylates CheY, the response regulator involved in flagellar movement and chemotaxis. This chain is Acetyl-coenzyme A synthetase, found in Yersinia pestis.